A 111-amino-acid polypeptide reads, in one-letter code: Nucleoid-associated protein Clim_0875 (111 aa).

It belongs to the YbaB/EbfC family. Homodimer.

It localises to the cytoplasm. The protein resides in the nucleoid. In terms of biological role, binds to DNA and alters its conformation. May be involved in regulation of gene expression, nucleoid organization and DNA protection. This chain is Nucleoid-associated protein Clim_0875, found in Chlorobium limicola (strain DSM 245 / NBRC 103803 / 6330).